A 258-amino-acid polypeptide reads, in one-letter code: 6-carboxyhexanoate--CoA ligase (258 aa).

This sequence belongs to the BioW family. In terms of assembly, homodimer. Mg(2+) is required as a cofactor.

It carries out the reaction heptanedioate + ATP + CoA = 6-carboxyhexanoyl-CoA + AMP + diphosphate. It participates in metabolic intermediate metabolism; pimeloyl-CoA biosynthesis; pimeloyl-CoA from pimelate: step 1/1. In terms of biological role, catalyzes the transformation of pimelate into pimeloyl-CoA with concomitant hydrolysis of ATP to AMP. The polypeptide is 6-carboxyhexanoate--CoA ligase (Bacillus atrophaeus (strain 1942)).